The sequence spans 351 residues: MKKLRKRKMSTYLSDYDYFLPEELIGQKPREPRDSAKLMLIDRKNGSVEHKNFYNIIDYLQKGDILVRNATKVIPARIFGHKDTGGVLEILLIKRITLDTWECLLKPAKKLKLGQKLYIGENKELIAELLEIKEDGNRILKFYYEGSFEEILDKLGSMPLPPYITRKLENKDRYQTVYAQRGESVAAPTAGLHFTEELLNKILDKGVEIVDIFLEVGLGTFRPVQTVNVLEHKMHEESFEISEKVAKIINEAKAEGRRIISVGTTATRALESSVDENGKLIAQKKDTGIFIYPGYKFKIVDALITNFHLPKSTLLMLVSAFYDREKMLEIYNLAVKEKYHFFSFGDSMFIY.

The protein belongs to the QueA family. As to quaternary structure, monomer.

The protein localises to the cytoplasm. The enzyme catalyses 7-aminomethyl-7-carbaguanosine(34) in tRNA + S-adenosyl-L-methionine = epoxyqueuosine(34) in tRNA + adenine + L-methionine + 2 H(+). It functions in the pathway tRNA modification; tRNA-queuosine biosynthesis. Transfers and isomerizes the ribose moiety from AdoMet to the 7-aminomethyl group of 7-deazaguanine (preQ1-tRNA) to give epoxyqueuosine (oQ-tRNA). This chain is S-adenosylmethionine:tRNA ribosyltransferase-isomerase, found in Fusobacterium nucleatum subsp. nucleatum (strain ATCC 25586 / DSM 15643 / BCRC 10681 / CIP 101130 / JCM 8532 / KCTC 2640 / LMG 13131 / VPI 4355).